We begin with the raw amino-acid sequence, 442 residues long: Chromosomal replication initiator protein DnaA (442 aa).

The segment at 1-84 is domain I, interacts with DnaA modulators; sequence MSVLWSHCIS…LEIGSRAAEA (84 aa). Residues 84–105 form a domain II region; sequence AAQMRSANPPRKTAPARKQVPN. Positions 106–322 are domain III, AAA+ region; sequence NLNSAFIFGN…GALRRVIANA (217 aa). The ATP site is built by G150, G152, K153, and T154. A domain IV, binds dsDNA region spans residues 323-442; that stretch reads QFTGRPITLE…FSNLLRILSN (120 aa).

Belongs to the DnaA family. Oligomerizes as a right-handed, spiral filament on DNA at oriC.

Its subcellular location is the cytoplasm. Plays an essential role in the initiation and regulation of chromosomal replication. ATP-DnaA binds to the origin of replication (oriC) to initiate formation of the DNA replication initiation complex once per cell cycle. Binds the DnaA box (a 9 base pair repeat at the origin) and separates the double-stranded (ds)DNA. Forms a right-handed helical filament on oriC DNA; dsDNA binds to the exterior of the filament while single-stranded (ss)DNA is stabiized in the filament's interior. The ATP-DnaA-oriC complex binds and stabilizes one strand of the AT-rich DNA unwinding element (DUE), permitting loading of DNA polymerase. After initiation quickly degrades to an ADP-DnaA complex that is not apt for DNA replication. Binds acidic phospholipids. This is Chromosomal replication initiator protein DnaA from Methylococcus capsulatus (strain ATCC 33009 / NCIMB 11132 / Bath).